We begin with the raw amino-acid sequence, 550 residues long: MFCVQCEQTIRTPAGNGCSYAQGMCGKTAETSDLQDLLIAALQGLSAWAVKAREYGIINHDVDNFAPRAFFSTLTNVNFDSPRIVGYAREAIALREALKAQCLSVDANAHCDNPMADLQLVSDDLGDLQRQAAEFTPNKDKAAIGENILGLRLLCLYGLKGAAAYMEHAHVLGQYDNDIYAQYHKIMAWLGTWPADMNALLECAMEIGQMNFKVMSILDAGETTKYGHPTPTQVNVKATEGKCILISGHDLKDLYNLLEQTEGTGVNVYTHGEMLPAHGYPELRKFKHLVGNYGSGWQNQQVEFARFPGPIVMTSNCIIDPTVGSYDDRIWTRSIVGWPGVSHLEGDDFGPVIAQAQQMAGFPYSEIPHIITVGFGRQTLLGAADTLIDLVSREKLRHIFLVGGCDGARGERNYFTDFATSVPDDCLILTLACGKYRFNKLEFGDIEGLPRLVDAGQCNDAYSAIILAVTLAEKLGCGVNDLPLSLVLSWFEQKAIVILLTLLSLGVKNIVTGPTAPGFFTPDLLAILNEKFGLRSVTTVEEDMKQLLSA.

Positions 3, 6, 18, and 25 each coordinate [2Fe-2S] cluster. Positions 249, 273, 317, 405, 433, 458, 492, and 494 each coordinate hybrid [4Fe-2O-2S] cluster. Cys405 carries the cysteine persulfide modification.

This sequence belongs to the HCP family. The cofactor is [2Fe-2S] cluster. Hybrid [4Fe-2O-2S] cluster is required as a cofactor.

It is found in the cytoplasm. It carries out the reaction A + NH4(+) + H2O = hydroxylamine + AH2 + H(+). Catalyzes the reduction of hydroxylamine to form NH(3) and H(2)O. The chain is Hydroxylamine reductase from Salmonella typhimurium (strain LT2 / SGSC1412 / ATCC 700720).